The sequence spans 361 residues: MGGTINAAIKQKFENEIFDLACFGENQVLLGFSNGRVSSYQYDVAQISLVEQWSTKRHKKSCRNISVNESGTEFISVGSDGVLKIADTSTGRVSSKWIVDKNKEISPYSVVQWIENDMVFATGDDNGCVSVWDKRTEGGIIHTHNDHIDYISSISPFEERYFVATSGDGVLSVIDARNFKKPILSEEQDEEMTCGAFTRDQHSKKKFAVGTASGVITLFTKGDWGDHTDRILSPIRSHDFSIETITRADSDSLYVGGSDGCIRLLHILPNKYERIIGQHSSRSTVDAVDVTTEGNFLVSCSGTELAFWPVDQKEGDESSSSDNLDSDEDSSSDSEFSSPKKKKKVGNQGKKPLGTDFFDGL.

WD repeat units follow at residues 57 to 96, 103 to 142, 146 to 184, 187 to 229, 237 to 275, and 280 to 318; these read RHKK…VSSK, KEIS…GIIH, DHID…KPIL, EQDE…DHTD, SHDF…YERI, and SSRS…GDES. The interval 311-361 is disordered; sequence DQKEGDESSSSDNLDSDEDSSSDSEFSSPKKKKKVGNQGKKPLGTDFFDGL.

The protein localises to the nucleus. It localises to the nucleolus. This is an uncharacterized protein from Schizosaccharomyces pombe (strain 972 / ATCC 24843) (Fission yeast).